The chain runs to 456 residues: Histidine--tRNA ligase (456 aa).

It belongs to the class-II aminoacyl-tRNA synthetase family. In terms of assembly, homodimer.

It is found in the cytoplasm. It carries out the reaction tRNA(His) + L-histidine + ATP = L-histidyl-tRNA(His) + AMP + diphosphate + H(+). This chain is Histidine--tRNA ligase, found in Christiangramia forsetii (strain DSM 17595 / CGMCC 1.15422 / KT0803) (Gramella forsetii).